Here is a 334-residue protein sequence, read N- to C-terminus: Holliday junction branch migration complex subunit RuvB (334 aa).

The interval 4–184 (ADRLIQPQIQ…FGIPLRLEFY (181 aa)) is large ATPase domain (RuvB-L). ATP-binding positions include Arg24, Gly65, Lys68, Thr69, Thr70, 131–133 (EDY), Arg174, Tyr184, and Arg221. Thr69 is a binding site for Mg(2+). Positions 185–255 (NIKDLSTIVT…VAEHALDLLD (71 aa)) are small ATPAse domain (RuvB-S). Residues 258 to 334 (SEGFDYMDRK…YQHFELIKPE (77 aa)) form a head domain (RuvB-H) region. The DNA site is built by Arg294, Arg313, and Arg318.

This sequence belongs to the RuvB family. As to quaternary structure, homohexamer. Forms an RuvA(8)-RuvB(12)-Holliday junction (HJ) complex. HJ DNA is sandwiched between 2 RuvA tetramers; dsDNA enters through RuvA and exits via RuvB. An RuvB hexamer assembles on each DNA strand where it exits the tetramer. Each RuvB hexamer is contacted by two RuvA subunits (via domain III) on 2 adjacent RuvB subunits; this complex drives branch migration. In the full resolvosome a probable DNA-RuvA(4)-RuvB(12)-RuvC(2) complex forms which resolves the HJ.

The protein localises to the cytoplasm. It carries out the reaction ATP + H2O = ADP + phosphate + H(+). In terms of biological role, the RuvA-RuvB-RuvC complex processes Holliday junction (HJ) DNA during genetic recombination and DNA repair, while the RuvA-RuvB complex plays an important role in the rescue of blocked DNA replication forks via replication fork reversal (RFR). RuvA specifically binds to HJ cruciform DNA, conferring on it an open structure. The RuvB hexamer acts as an ATP-dependent pump, pulling dsDNA into and through the RuvAB complex. RuvB forms 2 homohexamers on either side of HJ DNA bound by 1 or 2 RuvA tetramers; 4 subunits per hexamer contact DNA at a time. Coordinated motions by a converter formed by DNA-disengaged RuvB subunits stimulates ATP hydrolysis and nucleotide exchange. Immobilization of the converter enables RuvB to convert the ATP-contained energy into a lever motion, pulling 2 nucleotides of DNA out of the RuvA tetramer per ATP hydrolyzed, thus driving DNA branch migration. The RuvB motors rotate together with the DNA substrate, which together with the progressing nucleotide cycle form the mechanistic basis for DNA recombination by continuous HJ branch migration. Branch migration allows RuvC to scan DNA until it finds its consensus sequence, where it cleaves and resolves cruciform DNA. This Shewanella baltica (strain OS223) protein is Holliday junction branch migration complex subunit RuvB.